A 231-amino-acid polypeptide reads, in one-letter code: MCGNTMSVPLLTDAATVSGAERETAAVIFLHGLGDTGHSWADALSTIRLPHVKYICPHAPRIPVTLNMKMVMPSWFDLMGLSPDAPEDEAGIKKAAENIKALIEHEMKNGIPANRIVLGGFSQGGALSLYTALTCPHPLAGIVALSCWLPLHRNFPQAANGSAKDLAILQCHGELDPMVPVRFGALTAEKLRTVVTPARVQFKTYPGVMHSSCPQEMAAVKEFLEKLLPPV.

Residue Cys-2 is the site of S-palmitoyl cysteine attachment. Residue Ser-82 is modified to Phosphoserine. Catalysis depends on charge relay system residues Ser-122, Asp-176, and His-210.

The protein belongs to the AB hydrolase superfamily. AB hydrolase 2 family. Ubiquitous; detected at low levels.

The protein resides in the cytoplasm. It carries out the reaction S-hexadecanoyl-L-cysteinyl-[protein] + H2O = L-cysteinyl-[protein] + hexadecanoate + H(+). It catalyses the reaction prostaglandin E2 1-glyceryl ester + H2O = prostaglandin E2 + glycerol + H(+). The enzyme catalyses 1-hexadecanoyl-sn-glycero-3-phosphocholine + H2O = sn-glycerol 3-phosphocholine + hexadecanoate + H(+). The catalysed reaction is 1-octadecanoyl-sn-glycero-3-phosphocholine + H2O = octadecanoate + sn-glycerol 3-phosphocholine + H(+). It carries out the reaction 1-hexadecanoyl-sn-glycero-3-phosphate + H2O = sn-glycerol 3-phosphate + hexadecanoate + H(+). It catalyses the reaction 1-hexadecanoyl-sn-glycero-3-phospho-L-serine + H2O = sn-glycero-3-phospho-L-serine + hexadecanoate + H(+). In terms of biological role, acts as an acyl-protein thioesterase hydrolyzing fatty acids from S-acylated cysteine residues in proteins such as trimeric G alpha proteins, GSDMD, GAP43, ZDHHC6 or HRAS. Deacylates GAP43. Mediates depalmitoylation of ZDHHC6. Has lysophospholipase activity. Hydrolyzes prostaglandin glycerol esters (PG-Gs). Hydrolyzes PG-Gs in the following order prostaglandin D2-glycerol ester (PGD2-G) &gt; prostaglandin E2 glycerol ester (PGE2-G) &gt; prostaglandin F2-alpha-glycerol ester (PGF2-alpha-G). Hydrolyzes 1-arachidonoylglycerol but not 2-arachidonoylglycerol or arachidonoylethanolamide. The protein is Acyl-protein thioesterase 2 (Lypla2) of Mus musculus (Mouse).